A 543-amino-acid polypeptide reads, in one-letter code: Gap junction alpha-10 protein (543 aa).

Topologically, residues 1–16 are cytoplasmic; sequence MGDWNLLGGILEEVHS. Residues 17 to 37 traverse the membrane as a helical segment; that stretch reads HSTIVGKIWLTILFIFRMLVL. The Extracellular portion of the chain corresponds to 38–76; it reads RVAAEDVWDDEQSAFACNTRQPGCNNICYDDAFPISLIR. A helical membrane pass occupies residues 77-97; that stretch reads FWVLQIIFVSSPSLVYMGHAL. Residues 98 to 165 lie on the Cytoplasmic side of the membrane; it reads YRLRAFEKDR…TYVLHILTRS (68 aa). Residues 166–186 traverse the membrane as a helical segment; the sequence is VLEVGFMIGQYILYGFQMHPL. The Extracellular segment spans residues 187–209; that stretch reads YKCTQPPCPNAVDCFVSRPTEKT. A helical transmembrane segment spans residues 210 to 230; sequence IFMLFMHSIAAISLLLNILEI. Topologically, residues 231–543 are cytoplasmic; that stretch reads FHLGIRKIMR…HSIHSVKFNS (313 aa). Disordered stretches follow at residues 306–359 and 379–424; these read PQPR…SSFG and PSFA…DRSR. Basic and acidic residues predominate over residues 317-328; it reads NGKKDWSEKDQH. A compositionally biased stretch (polar residues) spans 344–359; that stretch reads AGNQHLGQQSDHSSFG. Residues 400-413 show a composition bias toward basic and acidic residues; the sequence is TDLHSHCRDSEGSM.

Belongs to the connexin family. Alpha-type (group II) subfamily. As to quaternary structure, a connexon is composed of a hexamer of connexins. Expressed in skeletal muscle and heart.

It localises to the cell membrane. It is found in the cell junction. Its subcellular location is the gap junction. In terms of biological role, one gap junction consists of a cluster of closely packed pairs of transmembrane channels, the connexons, through which materials of low MW diffuse from one cell to a neighboring cell. Involved in tracer coupling between horizontal cells of the retina. May play a role in the regulation of horizontal cell patterning. This Homo sapiens (Human) protein is Gap junction alpha-10 protein (GJA10).